Reading from the N-terminus, the 251-residue chain is Hydroxyacylglutathione hydrolase (251 aa).

Zn(2+)-binding residues include H53, H55, D57, H58, H110, D127, and H165.

Belongs to the metallo-beta-lactamase superfamily. Glyoxalase II family. Monomer. The cofactor is Zn(2+).

It carries out the reaction an S-(2-hydroxyacyl)glutathione + H2O = a 2-hydroxy carboxylate + glutathione + H(+). The protein operates within secondary metabolite metabolism; methylglyoxal degradation; (R)-lactate from methylglyoxal: step 2/2. Its function is as follows. Thiolesterase that catalyzes the hydrolysis of S-D-lactoyl-glutathione to form glutathione and D-lactic acid. This chain is Hydroxyacylglutathione hydrolase, found in Escherichia coli O17:K52:H18 (strain UMN026 / ExPEC).